Consider the following 491-residue polypeptide: UDP-N-acetylmuramate--L-alanine ligase (491 aa).

126–132 is an ATP binding site; sequence GTHGKTT.

The protein belongs to the MurCDEF family.

It is found in the cytoplasm. It catalyses the reaction UDP-N-acetyl-alpha-D-muramate + L-alanine + ATP = UDP-N-acetyl-alpha-D-muramoyl-L-alanine + ADP + phosphate + H(+). It participates in cell wall biogenesis; peptidoglycan biosynthesis. Cell wall formation. In Shigella dysenteriae serotype 1 (strain Sd197), this protein is UDP-N-acetylmuramate--L-alanine ligase.